The following is a 1733-amino-acid chain: MKVLFFSNKFPVEEHADLFQRIRQQSRSSRHAVLRQLLDECTAAVREEIRLLPAEIRTRLPPFQSILDLAEGFRWERSPLAGTFECVFLCLAELCLFVGDYEARPQAFKFTRSDSVFTGLGLGFLAATAIVASPTLIDVPATAADVIRIAMRAGLVVYHQGQNLEPQSLSAPLQSWTTLVKRLGEEAVQRELDCFNSAIPRPSQIYISVVEPDGSVFINGPPSIMRLLFSTPGPLQSAPRAPLPVYGGPCHAAHLYDRSHVSWIVKHVRSEIAWREFSDAAPLLSMADGQPLRAQTALELFESAAYVLLTGIIRWGNVLAALEEREDGAIQIESCGHSTPVEKLMRVLHAPTRDLTEWLSDEIEAVPGTHADCRIAVVGMSCRLPGADDLEHFWELLEQGRDVHQHVPPDRYDVQSHTDPTGRRMNTSQTPFGCFIDSPGLFDAGFFDMSPREAGQTDPTHRLALLTAYEALQQSGYIPDRTLSTIRETVATIYGQCSDDYREANAGQEIDMYFIPGNYRAFAPGRISYFFKFSGPSFSCDTACSASLAAVQIACATLSRGEANMVVAGGLNILTSSDSFAGLSRAHFLSKTGGCKVFDDGADGYCRADGVGSLVLKRLADAQRDNDNILGVILAAATNHSSAAVSITHPHAPTQEELYRNVLRQAGVSPLDVDLVEMHGTGTQAGDAAEIESVTRVFSPSRRSERLYIGSVKANLGHGEAAAGVTALIKALLIFQHNAIPKHVGIKTALNSRFPDLGQLNVHIPGETVPWSPRPNRKRYVMVNNFSAAGGNTALLLEEPPQRPTPGPACAQTRFVVTVSAKNPLSLRRNLERLMAFLRQHQPPVHLGSLAYTTTARRIHYPHRIAVQGASIADIIKHLELRLADLSLAHPQGAVARPPPIAFVFSGQGSFYPGISHDLLEHYPPYAREIHQLDALCLRHGFPSILPALTSSENSPSPLVTQLTTVCVQIALTHLWKSLAITPAVVIGASLGEYAALHATGALSASDTIFLVGQRGLLMQDLCTANTHTMLAVQATANEIAGCVPDSLSYEVACINSHRSITIAGTRSNITAIKASLESRGYRATELNVPYAFHSSHMDPILEKFNAIAQQATARALKVPLISPLLVDVLHEHTTLPASYLAEATRGRVRFSEALEKAHQATLITDQTVFVEIGIHPTYSNAVRSTVHNIAAVVPTLRSDQDNWHTLAGSMAALYEAAAGLDWNAWFEPFEPELRLLDLPRYAWNLKNHWIQHNGDWLLWKDKDRDRDNGKCMTHPDDGRGLYTPLLHRIVEETFWAGGGRVVMESNVHQEEFFAVASGHKMCGRPVVSVFSYPDMALSLARFVYTKVHPDISPPAMDFGNVHIFEGLIPHKDRSSPQWVRLQIKTTSVKHQLQVSFHRVGEDRVDQLATGTVSVGNAASWLSEWSGIAHLVSSRIKALQDLVHEGRADRLTRDTVYHLFRNSIVDYSPAYRGIQSAVIDGLEAVADVVLASSNMDRWTAPPHHVDSIAHVCGFVLNAGNAADHDNINTVYVMEGWRSMRFAKPLVSGRLYRSYVRMVPARDTGFFSGDVYVLDVAEDEVTGLLAGVTLRPLPRILMHRFFDPADDAHNWGNSPAKPEAKPEMVPTSGSSSAAGSPSGSSAGPLSIPERLADPSETSFQSKASKVSKALALIASETGIDMQDLNDETCLAQIGVDSLLSLVLVEKFALELGVHFPGSFFLDFPTVGEVKRQML.

The segment at 21-358 (RIRQQSRSSR…HAPTRDLTEW (338 aa)) is N-terminal acylcarrier protein transacylase domain (SAT). A Ketosynthase family 3 (KS3) domain is found at 372–799 (DCRIAVVGMS…GGNTALLLEE (428 aa)). Positions 406 to 422 (HVPPDRYDVQSHTDPTG) are enriched in basic and acidic residues. The interval 406-429 (HVPPDRYDVQSHTDPTGRRMNTSQ) is disordered. Active-site for beta-ketoacyl synthase activity residues include Cys544, His679, and His718. A malonyl-CoA:ACP transacylase (MAT) domain region spans residues 903–1211 (FVFSGQGSFY…DNWHTLAGSM (309 aa)). The tract at residues 1288-1420 (HRIVEETFWA…GTVSVGNAAS (133 aa)) is N-terminal hotdog fold. The 311-residue stretch at 1288–1598 (HRIVEETFWA…LRPLPRILMH (311 aa)) folds into the PKS/mFAS DH domain. Positions 1299–1594 (GGRVVMESNV…AGVTLRPLPR (296 aa)) are product template (PT) domain. The active-site Proton acceptor; for dehydratase activity is His1320. Residues 1448–1598 (ADRLTRDTVY…LRPLPRILMH (151 aa)) are C-terminal hotdog fold. Residue Asp1506 is the Proton donor; for dehydratase activity of the active site. Residues 1608-1659 (HNWGNSPAKPEAKPEMVPTSGSSSAAGSPSGSSAGPLSIPERLADPSETSFQ) are disordered. Over residues 1627 to 1643 (SGSSSAAGSPSGSSAGP) the composition is skewed to low complexity. In terms of domain architecture, Carrier spans 1659-1733 (QSKASKVSKA…TVGEVKRQML (75 aa)). Ser1696 carries the post-translational modification O-(pantetheine 4'-phosphoryl)serine.

The cofactor is pantetheine 4'-phosphate.

Its pathway is secondary metabolite biosynthesis. Its function is as follows. Non-reducing polyketide synthase; part of the gene cluster that mediates the biosynthesis of the bicoumarin desertorin. The non-reducing polyketide synthase desS first catalyzes the formation of the pentaketidic 4,7-dihydroxy-5-methylcoumarin from acetyl coenzyme A and 4 malonyl coenzyme A molecules. Further O-methylation by desB leads to the formation of 7-demethylsiderin. Then, an oxidative phenol coupling catalyzed by the cytochrome P450 monooxygenase desC forms the 6,8'-dimer M-desertorin A via dimerization the monomeric precursor, 7-demethylsiderin. M-desertorin A is further converted to M-desertorin C. This Aspergillus desertorum (Emericella desertorum) protein is Desertorin synthase.